The chain runs to 42 residues: Alpha-lactalbumin I (42 aa).

Residues 1–42 (IDYRKCQASQILKEHGMDKVIPLPELVCTMFHISGLSPQAEV) form the C-type lysozyme domain.

This sequence belongs to the glycosyl hydrolase 22 family. In terms of assembly, lactose synthase (LS) is a heterodimer of a catalytic component, beta1,4-galactosyltransferase (beta4Gal-T1) and a regulatory component, alpha-lactalbumin (LA). Mammary gland specific. Secreted in milk.

It localises to the secreted. In terms of biological role, regulatory subunit of lactose synthase, changes the substrate specificity of galactosyltransferase in the mammary gland making glucose a good acceptor substrate for this enzyme. This enables LS to synthesize lactose, the major carbohydrate component of milk. In other tissues, galactosyltransferase transfers galactose onto the N-acetylglucosamine of the oligosaccharide chains in glycoproteins. In Macropus giganteus (Eastern gray kangaroo), this protein is Alpha-lactalbumin I (LALBA).